We begin with the raw amino-acid sequence, 136 residues long: Large ribosomal subunit protein bL17 (136 aa).

The protein belongs to the bacterial ribosomal protein bL17 family. As to quaternary structure, part of the 50S ribosomal subunit. Contacts protein L32.

The polypeptide is Large ribosomal subunit protein bL17 (Rickettsia africae (strain ESF-5)).